The primary structure comprises 312 residues: Ribonuclease Z (312 aa).

Positions 63, 65, 67, 68, 140, 211, and 269 each coordinate Zn(2+). Aspartate 67 functions as the Proton acceptor in the catalytic mechanism.

The protein belongs to the RNase Z family. Homodimer. Requires Zn(2+) as cofactor.

The catalysed reaction is Endonucleolytic cleavage of RNA, removing extra 3' nucleotides from tRNA precursor, generating 3' termini of tRNAs. A 3'-hydroxy group is left at the tRNA terminus and a 5'-phosphoryl group is left at the trailer molecule.. Its function is as follows. Zinc phosphodiesterase, which displays some tRNA 3'-processing endonuclease activity. Probably involved in tRNA maturation, by removing a 3'-trailer from precursor tRNA. This is Ribonuclease Z from Shouchella clausii (strain KSM-K16) (Alkalihalobacillus clausii).